The following is a 353-amino-acid chain: S-adenosylmethionine:tRNA ribosyltransferase-isomerase (353 aa).

Belongs to the QueA family. As to quaternary structure, monomer.

It localises to the cytoplasm. The enzyme catalyses 7-aminomethyl-7-carbaguanosine(34) in tRNA + S-adenosyl-L-methionine = epoxyqueuosine(34) in tRNA + adenine + L-methionine + 2 H(+). The protein operates within tRNA modification; tRNA-queuosine biosynthesis. Functionally, transfers and isomerizes the ribose moiety from AdoMet to the 7-aminomethyl group of 7-deazaguanine (preQ1-tRNA) to give epoxyqueuosine (oQ-tRNA). The polypeptide is S-adenosylmethionine:tRNA ribosyltransferase-isomerase (Cupriavidus metallidurans (strain ATCC 43123 / DSM 2839 / NBRC 102507 / CH34) (Ralstonia metallidurans)).